The chain runs to 505 residues: Pleckstrin homology domain-containing family D member 1 (505 aa).

The region spanning 28 to 136 (KVQLYGVLWK…WLEMLQESGK (109 aa)) is the PH domain. Positions 146–391 (EAMIKSLEAQ…KVRNKEKEER (246 aa)) form a coiled coil. The segment at 264-284 (DKNQPQPLTNQSEQPPATDGL) is disordered. Polar residues predominate over residues 267 to 278 (QPQPLTNQSEQP). At R502 the chain carries Omega-N-methylarginine.

It belongs to the PLEKHD1 family.

The protein is Pleckstrin homology domain-containing family D member 1 (Plekhd1) of Rattus norvegicus (Rat).